A 59-amino-acid chain; its full sequence is U-actitoxin-Aer2b (59 aa).

Contains 5 disulfide bonds.

It is found in the secreted. It localises to the nematocyst. The polypeptide is U-actitoxin-Aer2b (Anemonia erythraea (Sea anemone)).